Reading from the N-terminus, the 316-residue chain is 4-hydroxy-3-methylbut-2-enyl diphosphate reductase (316 aa).

Cysteine 12 is a binding site for [4Fe-4S] cluster. Histidine 41 and histidine 74 together coordinate (2E)-4-hydroxy-3-methylbut-2-enyl diphosphate. 2 residues coordinate dimethylallyl diphosphate: histidine 41 and histidine 74. Histidine 41 and histidine 74 together coordinate isopentenyl diphosphate. Residue cysteine 96 coordinates [4Fe-4S] cluster. Histidine 124 is a binding site for (2E)-4-hydroxy-3-methylbut-2-enyl diphosphate. Residue histidine 124 participates in dimethylallyl diphosphate binding. Histidine 124 lines the isopentenyl diphosphate pocket. Glutamate 126 functions as the Proton donor in the catalytic mechanism. Threonine 169 is a (2E)-4-hydroxy-3-methylbut-2-enyl diphosphate binding site. [4Fe-4S] cluster is bound at residue cysteine 199. 4 residues coordinate (2E)-4-hydroxy-3-methylbut-2-enyl diphosphate: serine 227, serine 228, asparagine 229, and serine 271. The dimethylallyl diphosphate site is built by serine 227, serine 228, asparagine 229, and serine 271. Residues serine 227, serine 228, asparagine 229, and serine 271 each contribute to the isopentenyl diphosphate site.

This sequence belongs to the IspH family. The cofactor is [4Fe-4S] cluster.

It carries out the reaction isopentenyl diphosphate + 2 oxidized [2Fe-2S]-[ferredoxin] + H2O = (2E)-4-hydroxy-3-methylbut-2-enyl diphosphate + 2 reduced [2Fe-2S]-[ferredoxin] + 2 H(+). The enzyme catalyses dimethylallyl diphosphate + 2 oxidized [2Fe-2S]-[ferredoxin] + H2O = (2E)-4-hydroxy-3-methylbut-2-enyl diphosphate + 2 reduced [2Fe-2S]-[ferredoxin] + 2 H(+). Its pathway is isoprenoid biosynthesis; dimethylallyl diphosphate biosynthesis; dimethylallyl diphosphate from (2E)-4-hydroxy-3-methylbutenyl diphosphate: step 1/1. It participates in isoprenoid biosynthesis; isopentenyl diphosphate biosynthesis via DXP pathway; isopentenyl diphosphate from 1-deoxy-D-xylulose 5-phosphate: step 6/6. Its function is as follows. Catalyzes the conversion of 1-hydroxy-2-methyl-2-(E)-butenyl 4-diphosphate (HMBPP) into a mixture of isopentenyl diphosphate (IPP) and dimethylallyl diphosphate (DMAPP). Acts in the terminal step of the DOXP/MEP pathway for isoprenoid precursor biosynthesis. The sequence is that of 4-hydroxy-3-methylbut-2-enyl diphosphate reductase from Vibrio cholerae serotype O1 (strain ATCC 39315 / El Tor Inaba N16961).